Here is a 107-residue protein sequence, read N- to C-terminus: U1-lycotoxin-Ls1b (107 aa).

A signal peptide spans 1–20 (MMKVLVVVALLVTLISYSSS). A propeptide spanning residues 21-41 (EGIDDLEADELSSLMANEQTR) is cleaved from the precursor. 4 disulfides stabilise this stretch: Cys-44/Cys-59, Cys-51/Cys-68, Cys-58/Cys-86, and Cys-70/Cys-84.

Belongs to the neurotoxin 19 (CSTX) family. 04 (U1-Lctx) subfamily. Expressed by the venom gland.

It is found in the secreted. In Lycosa singoriensis (Wolf spider), this protein is U1-lycotoxin-Ls1b.